The primary structure comprises 241 residues: Methylthioribulose-1-phosphate dehydratase (241 aa).

A compositionally biased stretch (polar residues) spans 1 to 11 (MSSLCDTSNGE). The disordered stretch occupies residues 1-20 (MSSLCDTSNGESHADPCQDK). Cys-96 lines the substrate pocket. His-114 and His-116 together coordinate Zn(2+). The active-site Proton donor/acceptor is the Glu-138. His-194 provides a ligand contact to Zn(2+).

The protein belongs to the aldolase class II family. MtnB subfamily. Zn(2+) is required as a cofactor.

The protein localises to the cytoplasm. It catalyses the reaction 5-(methylsulfanyl)-D-ribulose 1-phosphate = 5-methylsulfanyl-2,3-dioxopentyl phosphate + H2O. It participates in amino-acid biosynthesis; L-methionine biosynthesis via salvage pathway; L-methionine from S-methyl-5-thio-alpha-D-ribose 1-phosphate: step 2/6. In terms of biological role, catalyzes the dehydration of methylthioribulose-1-phosphate (MTRu-1-P) into 2,3-diketo-5-methylthiopentyl-1-phosphate (DK-MTP-1-P). Functions in the methionine salvage pathway. May play a role in apoptosis. The chain is Methylthioribulose-1-phosphate dehydratase from Osmerus mordax (Rainbow smelt).